Here is a 218-residue protein sequence, read N- to C-terminus: MRITLGSRNPEDRRSSFLHMTASAAATSDSDLNTFADWLEGYYSNRAQAMAEPVWFVPVSLWYVRLPHLFSEGIGFFTEQFNEHTPGRFYRSRVLQVLADPLRIENYKLRDQAAWAGASQDLQRLAQLSLSDLQHLPGCRILVEKRADCYHGQMLPGGGCRLNPGDSTYIHIEFDLTAQEFITWDRGFDATTGQQTWGSRAGPYRYQKRIPVVFPPRP.

Belongs to the CpcT/CpeT biliprotein lyase family.

Functionally, covalently attaches a chromophore to Cys residue(s) of phycobiliproteins. This Synechococcus sp. (strain JA-3-3Ab) (Cyanobacteria bacterium Yellowstone A-Prime) protein is Chromophore lyase CpcT/CpeT 1.